The sequence spans 329 residues: Malate dehydrogenase (329 aa).

12 to 18 (GAAGQIG) is an NAD(+) binding site. Substrate contacts are provided by R95 and R101. NAD(+) contacts are provided by residues N108, Q115, and 132 to 134 (VGN). Substrate-binding residues include N134 and R165. Residue H190 is the Proton acceptor of the active site.

Belongs to the LDH/MDH superfamily. MDH type 2 family.

It catalyses the reaction (S)-malate + NAD(+) = oxaloacetate + NADH + H(+). In terms of biological role, catalyzes the reversible oxidation of malate to oxaloacetate. The polypeptide is Malate dehydrogenase (Ralstonia nicotianae (strain ATCC BAA-1114 / GMI1000) (Ralstonia solanacearum)).